The chain runs to 500 residues: Probable cytosol aminopeptidase (500 aa).

Mn(2+) is bound by residues K265 and D270. K277 is an active-site residue. Positions 288, 347, and 349 each coordinate Mn(2+). The active site involves R351.

This sequence belongs to the peptidase M17 family. The cofactor is Mn(2+).

It localises to the cytoplasm. The enzyme catalyses Release of an N-terminal amino acid, Xaa-|-Yaa-, in which Xaa is preferably Leu, but may be other amino acids including Pro although not Arg or Lys, and Yaa may be Pro. Amino acid amides and methyl esters are also readily hydrolyzed, but rates on arylamides are exceedingly low.. It carries out the reaction Release of an N-terminal amino acid, preferentially leucine, but not glutamic or aspartic acids.. In terms of biological role, presumably involved in the processing and regular turnover of intracellular proteins. Catalyzes the removal of unsubstituted N-terminal amino acids from various peptides. This Bdellovibrio bacteriovorus (strain ATCC 15356 / DSM 50701 / NCIMB 9529 / HD100) protein is Probable cytosol aminopeptidase.